The chain runs to 240 residues: MADS-box transcription factor 27 (240 aa).

The 61-residue stretch at 1-61 folds into the MADS-box domain; sequence MGRGKIVIRR…GRLYEYSSTS (61 aa). The region spanning 86–176 is the K-box domain; that stretch reads LKFWQREAAS…YKKISLIRQE (91 aa). The segment covering 220–231 has biased composition (polar residues); that stretch reads LPQHSDAEQSTA. The disordered stretch occupies residues 220–240; that stretch reads LPQHSDAEQSTAPKLGLQLNP.

Ubiquitous.

It localises to the nucleus. In terms of biological role, probable transcription factor. The polypeptide is MADS-box transcription factor 27 (MADS27) (Oryza sativa subsp. japonica (Rice)).